Consider the following 205-residue polypeptide: GTP cyclohydrolase-2 (205 aa).

49 to 53 (RIHSE) serves as a coordination point for GTP. 3 residues coordinate Zn(2+): Cys54, Cys65, and Cys67. Residues Gln70, 92-94 (EGR), and Thr114 each bind GTP. Asp126 acts as the Proton acceptor in catalysis. The active-site Nucleophile is the Arg128. GTP is bound by residues Thr149 and Lys154.

The protein belongs to the GTP cyclohydrolase II family. The cofactor is Zn(2+).

It catalyses the reaction GTP + 4 H2O = 2,5-diamino-6-hydroxy-4-(5-phosphoribosylamino)-pyrimidine + formate + 2 phosphate + 3 H(+). Its pathway is cofactor biosynthesis; riboflavin biosynthesis; 5-amino-6-(D-ribitylamino)uracil from GTP: step 1/4. Functionally, catalyzes the conversion of GTP to 2,5-diamino-6-ribosylamino-4(3H)-pyrimidinone 5'-phosphate (DARP), formate and pyrophosphate. The sequence is that of GTP cyclohydrolase-2 from Shewanella amazonensis (strain ATCC BAA-1098 / SB2B).